The primary structure comprises 298 residues: Probable endonuclease 4 (298 aa).

Positions 69, 110, 145, 179, 182, 214, 227, 229, and 259 each coordinate Zn(2+).

This sequence belongs to the AP endonuclease 2 family. Requires Zn(2+) as cofactor.

It catalyses the reaction Endonucleolytic cleavage to 5'-phosphooligonucleotide end-products.. Its function is as follows. Endonuclease IV plays a role in DNA repair. It cleaves phosphodiester bonds at apurinic or apyrimidinic (AP) sites, generating a 3'-hydroxyl group and a 5'-terminal sugar phosphate. The chain is Probable endonuclease 4 from Geobacillus sp. (strain WCH70).